Here is a 637-residue protein sequence, read N- to C-terminus: Transmembrane 9 superfamily member 10 (637 aa).

A signal peptide spans 1–23 (MAKVRILIFTLVLFFSLNVHIHG). The Lumenal portion of the chain corresponds to 24–274 (FYLPGVAPQD…YLLMADDQIH (251 aa)). Residues 275-295 (WFSIVNSMMIVLFLSGMVAMI) traverse the membrane as a helical segment. The Cytoplasmic portion of the chain corresponds to 296-344 (MLRTLYRDISNYNQLESHEEALEETGWKLVHGDVFRPPTNPELLCVYAG). A helical membrane pass occupies residues 345–365 (TGVQCFGMILVTMIFACLGFL). At 366–370 (SPSNR) the chain is on the lumenal side. Residues 371–391 (GGLMTAMLLLWVFMGLLAGYA) form a helical membrane-spanning segment. Over 392 to 411 (SSRLYKTLRGTEWKRNALKT) the chain is Cytoplasmic. The helical transmembrane segment at 412–432 (AFMFPATVFVAFFVLNAIIWG) threads the bilayer. Topologically, residues 433–444 (QKSSGAVPFGTM) are lumenal. Residues 445–465 (FALVVLWFGISVPLVFIGGYI) traverse the membrane as a helical segment. Residues 466-494 (GFRKPAPEDPVKTNKIPRQIPTQAWYMNP) are Cytoplasmic-facing. Residues 495-515 (IFSILIGGILPFGAVFIELFF) form a helical membrane-spanning segment. The Lumenal segment spans residues 516–527 (ILTSIWLHQFYY). A helical membrane pass occupies residues 528-548 (IFGFLFIVFIILIITCAEITV). Residues 549-566 (VLCYFQLCSEDYQWWWRS) lie on the Cytoplasmic side of the membrane. The helical transmembrane segment at 567 to 587 (YLTSGSSAVYLFLYAVFYFYT) threads the bilayer. Residues 588 to 593 (KLEITK) lie on the Lumenal side of the membrane. The helical transmembrane segment at 594 to 614 (LVSAVLYFGYMLIVSYVFFVF) threads the bilayer. The Cytoplasmic portion of the chain corresponds to 615 to 637 (TGAIGFYACFWFTRLIYSSVKID). Positions 626–631 (FTRLIY) match the Endoplasmic reticulum export signal motif. The short motif at 635–637 (KID) is the Golgi retention signal element.

This sequence belongs to the nonaspanin (TM9SF) (TC 9.A.2) family.

Its subcellular location is the endosome membrane. It is found in the golgi apparatus membrane. The polypeptide is Transmembrane 9 superfamily member 10 (Arabidopsis thaliana (Mouse-ear cress)).